The following is an 855-amino-acid chain: DNA mismatch repair protein MutS (855 aa).

ATP is bound at residue 616–623 (GPNMGGKS).

The protein belongs to the DNA mismatch repair MutS family.

Functionally, this protein is involved in the repair of mismatches in DNA. It is possible that it carries out the mismatch recognition step. This protein has a weak ATPase activity. In Escherichia coli O139:H28 (strain E24377A / ETEC), this protein is DNA mismatch repair protein MutS.